The sequence spans 452 residues: Retinoid-inducible serine carboxypeptidase (452 aa).

The first 28 residues, 1-28 (MELSRRICLVRLWLLLLSFLLGFSAGSA), serve as a signal peptide directing secretion. 3 N-linked (GlcNAc...) asparagine glycosylation sites follow: Asn-64, Asn-102, and Asn-126. Ser-167 is a catalytic residue. Asn-192 and Asn-362 each carry an N-linked (GlcNAc...) asparagine glycan. Active-site residues include Asp-371 and His-431.

This sequence belongs to the peptidase S10 family. In terms of tissue distribution, highly expressed in aorta, bladder, and kidney with much lower levels in all other tissues analyzed. Expression in kidney is restricted to proximal convoluted tubules.

Its subcellular location is the secreted. Its function is as follows. May be involved in vascular wall and kidney homeostasis. The sequence is that of Retinoid-inducible serine carboxypeptidase (Scpep1) from Rattus norvegicus (Rat).